The sequence spans 71 residues: Calcium dodecin (71 aa).

Glu18 provides a ligand contact to Ca(2+).

This sequence belongs to the dodecin family. In terms of assembly, homododecamer; 12 subunits assemble to form a hollow sphere with a diameter of about 75 Angstroms. Calcium ions are bound at the interface between three subunits.

In terms of biological role, binds calcium ions. May play a role in sequestering additional small ligands. The sequence is that of Calcium dodecin (secE2) from Mycobacterium tuberculosis (strain ATCC 25618 / H37Rv).